We begin with the raw amino-acid sequence, 510 residues long: Internal alternative NAD(P)H-ubiquinone oxidoreductase A1, mitochondrial (510 aa).

A mitochondrion-targeting transit peptide spans 1 to 48 (MLWIKNLARISQTTSSSVGNVFRNPESYTLSSRFCTALQKQQVTDTVQ). 75-105 (RVLVLGSGWAGCRVLKGIDTSIYDVVCVSPR) provides a ligand contact to FAD. 242–278 (LHCVVVGGGPTGVEFSGELSDFIMKDVRQRYSHVKDD) is a binding site for NAD(+). A Microbody targeting signal motif is present at residues 501–510 (FVFGRDISRI).

This sequence belongs to the NADH dehydrogenase family. It depends on FAD as a cofactor. In terms of tissue distribution, expressed in seedlings, cotyledons, young leaves, stems and flowers and, to a lower extent, in roots and buds.

The protein resides in the mitochondrion inner membrane. It localises to the peroxisome. The enzyme catalyses a quinone + NADH + H(+) = a quinol + NAD(+). The catalysed reaction is a ubiquinone + NADH + H(+) = a ubiquinol + NAD(+). In terms of biological role, alternative NADH-ubiquinone oxidoreductase which catalyzes the oxidation of mitochondrial NADH does not translocate protons across the inner mitochondrial membrane. The polypeptide is Internal alternative NAD(P)H-ubiquinone oxidoreductase A1, mitochondrial (NDA1) (Arabidopsis thaliana (Mouse-ear cress)).